The chain runs to 251 residues: ATP synthase subunit a (251 aa).

The next 7 membrane-spanning stretches (helical) occupy residues 29 to 49 (FTQSALYMFAAVGIIALITLV), 56 to 73 (LVPGRMQSLAEAFYEFIA), 87 to 107 (FVPLVFSLFMFVLVLNLFGMI), 117 to 137 (IIVTFMLALVVILTVVIYGFM), 159 to 181 (LIVAIEVVSFISRPISLSVRLFA), 192 to 212 (IFAGFVPALLAAGIWGILSPL), and 218 to 238 (VAITALEMLVAVLQAYVFATL).

It belongs to the ATPase A chain family. In terms of assembly, F-type ATPases have 2 components, CF(1) - the catalytic core - and CF(0) - the membrane proton channel. CF(1) has five subunits: alpha(3), beta(3), gamma(1), delta(1), epsilon(1). CF(0) has three main subunits: a(1), b(2) and c(9-12). The alpha and beta chains form an alternating ring which encloses part of the gamma chain. CF(1) is attached to CF(0) by a central stalk formed by the gamma and epsilon chains, while a peripheral stalk is formed by the delta and b chains.

It is found in the cell inner membrane. Key component of the proton channel; it plays a direct role in the translocation of protons across the membrane. This Methylobacterium sp. (strain 4-46) protein is ATP synthase subunit a.